Here is a 121-residue protein sequence, read N- to C-terminus: Large ribosomal subunit protein uL18 (121 aa).

Positions 63–88 (AAIRPDPSPKKSQKQPPKTHKRYNLK) are disordered. Residues 73-87 (KSQKQPPKTHKRYNL) are compositionally biased toward basic residues.

The protein belongs to the universal ribosomal protein uL18 family. As to quaternary structure, component of the large ribosomal subunit (LSU).

The protein resides in the cytoplasm. Its subcellular location is the nucleus. Its function is as follows. Component of the ribosome, a large ribonucleoprotein complex responsible for the synthesis of proteins in the cell. The small ribosomal subunit (SSU) binds messenger RNAs (mRNAs) and translates the encoded message by selecting cognate aminoacyl-transfer RNA (tRNA) molecules. The large subunit (LSU) contains the ribosomal catalytic site termed the peptidyl transferase center (PTC), which catalyzes the formation of peptide bonds, thereby polymerizing the amino acids delivered by tRNAs into a polypeptide chain. The nascent polypeptides leave the ribosome through a tunnel in the LSU and interact with protein factors that function in enzymatic processing, targeting, and the membrane insertion of nascent chains at the exit of the ribosomal tunnel. In Solanum melongena (Eggplant), this protein is Large ribosomal subunit protein uL18 (RPL5).